The following is a 349-amino-acid chain: Isopentenyl-diphosphate delta-isomerase (349 aa).

6 to 7 (RK) serves as a coordination point for substrate. FMN is bound by residues 62–64 (AMT), Ser93, and Asn122. Residue Gln152 participates in substrate binding. Mg(2+) is bound at residue Glu153. FMN contacts are provided by residues Lys184, Thr214, 258 to 259 (GG), and 280 to 281 (AG).

This sequence belongs to the IPP isomerase type 2 family. Homooctamer. Dimer of tetramers. The cofactor is FMN. Requires NADPH as cofactor. Mg(2+) serves as cofactor.

The protein resides in the cytoplasm. The catalysed reaction is isopentenyl diphosphate = dimethylallyl diphosphate. Involved in the biosynthesis of isoprenoids. Catalyzes the 1,3-allylic rearrangement of the homoallylic substrate isopentenyl (IPP) to its allylic isomer, dimethylallyl diphosphate (DMAPP). The chain is Isopentenyl-diphosphate delta-isomerase from Bacillus mycoides (strain KBAB4) (Bacillus weihenstephanensis).